The following is a 188-amino-acid chain: UPF0397 protein LACR_0367 (188 aa).

5 helical membrane-spanning segments follow: residues 14–34 (IVVATGIGAALFVIIGWLINI), 48–68 (AVLALFSALFGPLAGFLIGFI), 80–100 (APWWTWVLGSGLMGLFLGFGV), 120–140 (IVQFLANVVVWGLIAPIGDIL), and 152–172 (QGVVAGLVNALTIAVAGTLLL).

The protein belongs to the UPF0397 family.

The protein resides in the cell membrane. In Lactococcus lactis subsp. cremoris (strain SK11), this protein is UPF0397 protein LACR_0367.